Consider the following 421-residue polypeptide: 3-isopropylmalate dehydratase large subunit (421 aa).

Residues C301, C361, and C364 each coordinate [4Fe-4S] cluster.

This sequence belongs to the aconitase/IPM isomerase family. LeuC type 2 subfamily. As to quaternary structure, heterodimer of LeuC and LeuD. It depends on [4Fe-4S] cluster as a cofactor.

It catalyses the reaction (2R,3S)-3-isopropylmalate = (2S)-2-isopropylmalate. It participates in amino-acid biosynthesis; L-leucine biosynthesis; L-leucine from 3-methyl-2-oxobutanoate: step 2/4. Its function is as follows. Catalyzes the isomerization between 2-isopropylmalate and 3-isopropylmalate, via the formation of 2-isopropylmaleate. The chain is 3-isopropylmalate dehydratase large subunit from Desulfitobacterium hafniense (strain Y51).